Here is a 363-residue protein sequence, read N- to C-terminus: Anhydro-N-acetylmuramic acid kinase (363 aa).

10-17 (GTSLDGLD) contributes to the ATP binding site.

Belongs to the anhydro-N-acetylmuramic acid kinase family.

The enzyme catalyses 1,6-anhydro-N-acetyl-beta-muramate + ATP + H2O = N-acetyl-D-muramate 6-phosphate + ADP + H(+). The protein operates within amino-sugar metabolism; 1,6-anhydro-N-acetylmuramate degradation. It participates in cell wall biogenesis; peptidoglycan recycling. Catalyzes the specific phosphorylation of 1,6-anhydro-N-acetylmuramic acid (anhMurNAc) with the simultaneous cleavage of the 1,6-anhydro ring, generating MurNAc-6-P. Is required for the utilization of anhMurNAc either imported from the medium or derived from its own cell wall murein, and thus plays a role in cell wall recycling. Contributes to intrinsic fosfomycin resistance in P.putida. The polypeptide is Anhydro-N-acetylmuramic acid kinase (Pseudomonas putida (strain ATCC 47054 / DSM 6125 / CFBP 8728 / NCIMB 11950 / KT2440)).